We begin with the raw amino-acid sequence, 429 residues long: 5-methylthioadenosine/S-adenosylhomocysteine deaminase (429 aa).

2 residues coordinate Zn(2+): histidine 65 and histidine 67. Residues glutamate 94 and histidine 182 each coordinate substrate. Histidine 209 lines the Zn(2+) pocket. Substrate-binding residues include glutamate 212 and aspartate 297. Aspartate 297 contacts Zn(2+).

Belongs to the metallo-dependent hydrolases superfamily. MTA/SAH deaminase family. Zn(2+) is required as a cofactor.

It catalyses the reaction S-adenosyl-L-homocysteine + H2O + H(+) = S-inosyl-L-homocysteine + NH4(+). The enzyme catalyses S-methyl-5'-thioadenosine + H2O + H(+) = S-methyl-5'-thioinosine + NH4(+). Functionally, catalyzes the deamination of 5-methylthioadenosine and S-adenosyl-L-homocysteine into 5-methylthioinosine and S-inosyl-L-homocysteine, respectively. Is also able to deaminate adenosine. The sequence is that of 5-methylthioadenosine/S-adenosylhomocysteine deaminase from Clostridium tetani (strain Massachusetts / E88).